A 444-amino-acid polypeptide reads, in one-letter code: Tubulin beta-7 chain (444 aa).

GTP-binding residues include Gln11, Glu69, Ser138, Gly142, Thr143, Gly144, Asn204, and Asn226. Glu69 provides a ligand contact to Mg(2+).

It belongs to the tubulin family. In terms of assembly, dimer of alpha and beta chains. A typical microtubule is a hollow water-filled tube with an outer diameter of 25 nm and an inner diameter of 15 nM. Alpha-beta heterodimers associate head-to-tail to form protofilaments running lengthwise along the microtubule wall with the beta-tubulin subunit facing the microtubule plus end conferring a structural polarity. Microtubules usually have 13 protofilaments but different protofilament numbers can be found in some organisms and specialized cells. Mg(2+) is required as a cofactor.

It is found in the cytoplasm. The protein resides in the cytoskeleton. Tubulin is the major constituent of microtubules, a cylinder consisting of laterally associated linear protofilaments composed of alpha- and beta-tubulin heterodimers. Microtubules grow by the addition of GTP-tubulin dimers to the microtubule end, where a stabilizing cap forms. Below the cap, tubulin dimers are in GDP-bound state, owing to GTPase activity of alpha-tubulin. The sequence is that of Tubulin beta-7 chain from Gossypium hirsutum (Upland cotton).